Consider the following 597-residue polypeptide: Elongation factor 4 (597 aa).

Positions 2-184 constitute a tr-type G domain; the sequence is DHIRNFSIIA…SLIAKVPPPK (183 aa). Residues 14-19 and 131-134 each bind GTP; these read DHGKST and NKID.

It belongs to the TRAFAC class translation factor GTPase superfamily. Classic translation factor GTPase family. LepA subfamily.

Its subcellular location is the cell inner membrane. It carries out the reaction GTP + H2O = GDP + phosphate + H(+). Required for accurate and efficient protein synthesis under certain stress conditions. May act as a fidelity factor of the translation reaction, by catalyzing a one-codon backward translocation of tRNAs on improperly translocated ribosomes. Back-translocation proceeds from a post-translocation (POST) complex to a pre-translocation (PRE) complex, thus giving elongation factor G a second chance to translocate the tRNAs correctly. Binds to ribosomes in a GTP-dependent manner. This chain is Elongation factor 4, found in Burkholderia lata (strain ATCC 17760 / DSM 23089 / LMG 22485 / NCIMB 9086 / R18194 / 383).